The primary structure comprises 431 residues: tRNA-2-methylthio-N(6)-dimethylallyladenosine synthase (431 aa).

Positions 2–117 (KKLFIETLGC…ITEVVDKKHA (116 aa)) constitute an MTTase N-terminal domain. [4Fe-4S] cluster-binding residues include cysteine 11, cysteine 48, cysteine 80, cysteine 149, cysteine 153, and cysteine 156. Positions 135–368 (RTNPFKAMVN…QTRHTEILDE (234 aa)) constitute a Radical SAM core domain. A TRAM domain is found at 371–431 (DAQLGKVHEV…SRGALDGVLV (61 aa)).

Belongs to the methylthiotransferase family. MiaB subfamily. In terms of assembly, monomer. [4Fe-4S] cluster is required as a cofactor.

The protein resides in the cytoplasm. The enzyme catalyses N(6)-dimethylallyladenosine(37) in tRNA + (sulfur carrier)-SH + AH2 + 2 S-adenosyl-L-methionine = 2-methylsulfanyl-N(6)-dimethylallyladenosine(37) in tRNA + (sulfur carrier)-H + 5'-deoxyadenosine + L-methionine + A + S-adenosyl-L-homocysteine + 2 H(+). Its function is as follows. Catalyzes the methylthiolation of N6-(dimethylallyl)adenosine (i(6)A), leading to the formation of 2-methylthio-N6-(dimethylallyl)adenosine (ms(2)i(6)A) at position 37 in tRNAs that read codons beginning with uridine. The polypeptide is tRNA-2-methylthio-N(6)-dimethylallyladenosine synthase (Sulfurovum sp. (strain NBC37-1)).